Here is a 315-residue protein sequence, read N- to C-terminus: Ribosomal RNA small subunit methyltransferase H (315 aa).

S-adenosyl-L-methionine is bound by residues Gly-36 to His-38, Asp-56, Phe-80, Asp-102, and Gln-109.

It belongs to the methyltransferase superfamily. RsmH family.

The protein resides in the cytoplasm. It carries out the reaction cytidine(1402) in 16S rRNA + S-adenosyl-L-methionine = N(4)-methylcytidine(1402) in 16S rRNA + S-adenosyl-L-homocysteine + H(+). Specifically methylates the N4 position of cytidine in position 1402 (C1402) of 16S rRNA. In Proteus mirabilis (strain HI4320), this protein is Ribosomal RNA small subunit methyltransferase H.